The following is a 222-amino-acid chain: tRNA (guanine-N(1)-)-methyltransferase (222 aa).

S-adenosyl-L-methionine contacts are provided by residues Gly-112 and 132–137; that span reads IGDYVL.

It belongs to the RNA methyltransferase TrmD family. In terms of assembly, homodimer.

It localises to the cytoplasm. It carries out the reaction guanosine(37) in tRNA + S-adenosyl-L-methionine = N(1)-methylguanosine(37) in tRNA + S-adenosyl-L-homocysteine + H(+). Specifically methylates guanosine-37 in various tRNAs. This is tRNA (guanine-N(1)-)-methyltransferase from Azobacteroides pseudotrichonymphae genomovar. CFP2.